The following is a 680-amino-acid chain: MVRRRQRLPEVDMGLVSFEDVAVDFTWQEWQELDAAQRTLYRDVMLENYRSLVWLGHCLAKPELISKLEEGFEPWGVAEATEQCLPGVRKWSAPVEKGQQSQEKYLRQVKIIKKNTPDEDKVEVENTYNVDSNCISNMTLKNEVCSRVFFQELVNPLLDVPLPTEAGERQSTEVPHDLNRTQEVLSYPKHFTHHSKDQYSQCCFQYFGPDEAFHTKAILTPEMFYVQETSRTCNNYDKSFDEVTIPAQYMTQLRKQTLGWNICHKIFPNKTELSNHDAMHTGENDDKCDYEKPIINKSLYLTKHQEAHAGIEPQAHKENIKFFCLDAELQTVDPELHGEKQVYECKVSGKTFRHQPEHISQQRPHACERACQAKEHGEAGCDEPALTQHQRLCTEEKACEGKACSKAFHHKSLLPQYQSARADEQQSDCKELMKIYFYVSSPTQHHGPPPPEKPFRCNDCLKTFSHKSQLERHQRMHTGEKPHECKECRKAFCHKSHLIRHQGIHAPEKPYECNECKKSFYLRSQLTLHERTHTGEKPFECKECRKAFSRNSHLTQHQKIHTGEKPHKCKECGNAFARKSHLIQHQKTHTGERPYECKECRKAFSRKSQLMQHETTHTGERAYECKECRKTFYLKAYLTRHQVIHQSEKPFECKKCGKAFSRKSYLTRHQKIHKGQTLSG.

The 72-residue stretch at 16 to 87 folds into the KRAB domain; the sequence is VSFEDVAVDF…AEATEQCLPG (72 aa). The segment at 263-280 adopts a C2H2-type 1; degenerate zinc-finger fold; the sequence is CHKIFPNKTELSNHDAMH. 8 consecutive C2H2-type zinc fingers follow at residues 455–477, 483–505, 511–533, 539–561, 567–589, 595–617, 623–645, and 651–673; these read FRCN…QRMH, HECK…QGIH, YECN…ERTH, FECK…QKIH, HKCK…QKTH, YECK…ETTH, and YECK…QVIH.

Post-translationally, polyubiquitinated, leading to its degradation via the ubiquitin-proteasome pathway. As to expression, expressed during osteogenic differentiation where levels increase from the first days of differentiation and remain high during the whole process. Highly expressed in lung.

The protein resides in the nucleus. In terms of biological role, may modulate osteogenic differentiation, at least in part, through the bone morphogenetic protein (BMP) signaling pathway, increasing RUNX2 activation and leading to osteoblast commitment and maturation. This is Zinc finger protein OBI1 (ObI1) from Mus musculus (Mouse).